Consider the following 37-residue polypeptide: Large ribosomal subunit protein bL36 (37 aa).

This sequence belongs to the bacterial ribosomal protein bL36 family.

The protein is Large ribosomal subunit protein bL36 of Photobacterium profundum (strain SS9).